Reading from the N-terminus, the 445-residue chain is Probable glycine dehydrogenase (decarboxylating) subunit 1 (445 aa).

This sequence belongs to the GcvP family. N-terminal subunit subfamily. The glycine cleavage system is composed of four proteins: P, T, L and H. In this organism, the P 'protein' is a heterodimer of two subunits.

The enzyme catalyses N(6)-[(R)-lipoyl]-L-lysyl-[glycine-cleavage complex H protein] + glycine + H(+) = N(6)-[(R)-S(8)-aminomethyldihydrolipoyl]-L-lysyl-[glycine-cleavage complex H protein] + CO2. In terms of biological role, the glycine cleavage system catalyzes the degradation of glycine. The P protein binds the alpha-amino group of glycine through its pyridoxal phosphate cofactor; CO(2) is released and the remaining methylamine moiety is then transferred to the lipoamide cofactor of the H protein. This is Probable glycine dehydrogenase (decarboxylating) subunit 1 from Chlorobium chlorochromatii (strain CaD3).